The chain runs to 172 residues: Phosphopantetheine adenylyltransferase (172 aa).

Threonine 14 serves as a coordination point for substrate. ATP-binding positions include 14 to 15 (TF) and histidine 22. Substrate is bound by residues lysine 46, leucine 78, and arginine 92. Residues 93–95 (GLR), glutamate 103, and 128–134 (WLYISST) each bind ATP.

It belongs to the bacterial CoaD family. In terms of assembly, homohexamer. It depends on Mg(2+) as a cofactor.

The protein localises to the cytoplasm. It catalyses the reaction (R)-4'-phosphopantetheine + ATP + H(+) = 3'-dephospho-CoA + diphosphate. It participates in cofactor biosynthesis; coenzyme A biosynthesis; CoA from (R)-pantothenate: step 4/5. Its function is as follows. Reversibly transfers an adenylyl group from ATP to 4'-phosphopantetheine, yielding dephospho-CoA (dPCoA) and pyrophosphate. The sequence is that of Phosphopantetheine adenylyltransferase from Lawsonia intracellularis (strain PHE/MN1-00).